Here is a 369-residue protein sequence, read N- to C-terminus: Cyclin-I2 (369 aa).

Residues 1–116 (MASGAQLPPQ…SRKPRNLEGD (116 aa)) are disordered. Composition is skewed to low complexity over residues 64-76 (AASL…AVPV) and 83-101 (APAG…EQAP).

It belongs to the cyclin family.

This chain is Cyclin-I2 (CCNI2), found in Homo sapiens (Human).